The following is a 121-amino-acid chain: Large ribosomal subunit protein bL12 (121 aa).

It belongs to the bacterial ribosomal protein bL12 family. Homodimer. Part of the ribosomal stalk of the 50S ribosomal subunit. Forms a multimeric L10(L12)X complex, where L10 forms an elongated spine to which 2 to 4 L12 dimers bind in a sequential fashion. Binds GTP-bound translation factors.

In terms of biological role, forms part of the ribosomal stalk which helps the ribosome interact with GTP-bound translation factors. Is thus essential for accurate translation. The sequence is that of Large ribosomal subunit protein bL12 from Shewanella baltica (strain OS185).